We begin with the raw amino-acid sequence, 884 residues long: Alanine--tRNA ligase (884 aa).

Zn(2+) contacts are provided by His-562, His-566, Cys-674, and His-678.

It belongs to the class-II aminoacyl-tRNA synthetase family. The cofactor is Zn(2+).

It localises to the cytoplasm. It carries out the reaction tRNA(Ala) + L-alanine + ATP = L-alanyl-tRNA(Ala) + AMP + diphosphate. Its function is as follows. Catalyzes the attachment of alanine to tRNA(Ala) in a two-step reaction: alanine is first activated by ATP to form Ala-AMP and then transferred to the acceptor end of tRNA(Ala). Also edits incorrectly charged Ser-tRNA(Ala) and Gly-tRNA(Ala) via its editing domain. The polypeptide is Alanine--tRNA ligase (Rhizobium etli (strain ATCC 51251 / DSM 11541 / JCM 21823 / NBRC 15573 / CFN 42)).